Reading from the N-terminus, the 396-residue chain is Elongation factor Tu (396 aa).

A tr-type G domain is found at 10–206 (KPHVNVGTIG…ALDSYIPEPT (197 aa)). Residues 19-26 (GHVDHGKT) form a G1 region. 19 to 26 (GHVDHGKT) is a binding site for GTP. Position 26 (threonine 26) interacts with Mg(2+). The tract at residues 60–64 (GITIS) is G2. The tract at residues 81-84 (DCPG) is G3. GTP contacts are provided by residues 81-85 (DCPGH) and 136-139 (NKAD). The G4 stretch occupies residues 136–139 (NKAD). A G5 region spans residues 174–176 (SAL).

This sequence belongs to the TRAFAC class translation factor GTPase superfamily. Classic translation factor GTPase family. EF-Tu/EF-1A subfamily. In terms of assembly, monomer.

It localises to the cytoplasm. It catalyses the reaction GTP + H2O = GDP + phosphate + H(+). Its function is as follows. GTP hydrolase that promotes the GTP-dependent binding of aminoacyl-tRNA to the A-site of ribosomes during protein biosynthesis. The protein is Elongation factor Tu of Hydrogenovibrio crunogenus (strain DSM 25203 / XCL-2) (Thiomicrospira crunogena).